The chain runs to 654 residues: Probable replication restart protein PriA (654 aa).

The Zn(2+) site is built by Cys367, Cys370, Cys376, Cys379, Cys395, Cys398, Cys407, and Cys410.

Belongs to the helicase family. PriA subfamily. Component of the replication restart primosome. Zn(2+) is required as a cofactor.

Functionally, initiates the restart of stalled replication forks, which reloads the replicative helicase on sites other than the origin of replication. Recognizes and binds to abandoned replication forks and remodels them to uncover a helicase loading site. Promotes assembly of the primosome at these replication forks. In Mycobacterium tuberculosis (strain CDC 1551 / Oshkosh), this protein is Probable replication restart protein PriA.